A 427-amino-acid chain; its full sequence is Glutamate-1-semialdehyde 2,1-aminomutase (427 aa).

Lysine 268 is subject to N6-(pyridoxal phosphate)lysine.

Belongs to the class-III pyridoxal-phosphate-dependent aminotransferase family. HemL subfamily. The cofactor is pyridoxal 5'-phosphate.

The protein resides in the cytoplasm. The catalysed reaction is (S)-4-amino-5-oxopentanoate = 5-aminolevulinate. It participates in porphyrin-containing compound metabolism; protoporphyrin-IX biosynthesis; 5-aminolevulinate from L-glutamyl-tRNA(Glu): step 2/2. This is Glutamate-1-semialdehyde 2,1-aminomutase from Methanococcus maripaludis (strain DSM 14266 / JCM 13030 / NBRC 101832 / S2 / LL).